The primary structure comprises 531 residues: Arginine--tRNA ligase (531 aa).

Positions 113 to 123 (ANPTGPLHIGH) match the 'HIGH' region motif.

This sequence belongs to the class-I aminoacyl-tRNA synthetase family. In terms of assembly, monomer.

The protein resides in the cytoplasm. It catalyses the reaction tRNA(Arg) + L-arginine + ATP = L-arginyl-tRNA(Arg) + AMP + diphosphate. In Campylobacter lari (strain RM2100 / D67 / ATCC BAA-1060), this protein is Arginine--tRNA ligase.